The sequence spans 267 residues: MQKRKTVLDIQRMKAEGEKIAMLTAYDYPFARLMDLEGIDMVLVGDSVGPVVAGYDHTLPVTMDEMIYHCRAVARGLGQAFLVADMPFLSYQVDLREARLNAGRLVKEGCAQAVKLEGGEPVAEVIRTLVDMDIPVVGHIGLTPQSIHRMGGYKVQGKHDQQARQLMRDARAVQEAGAFAVVLEGIPAGLAGQITEALDIPTIGIGAGVDCDGQVLVIHDILGLCEKYSPRFVKRYADVASIIRQGVKEYIGDVKQGVFPGPEHSFS.

Mg(2+) contacts are provided by aspartate 46 and aspartate 85. Residues 46 to 47 (DS), aspartate 85, and lysine 115 each bind 3-methyl-2-oxobutanoate. Position 117 (glutamate 117) interacts with Mg(2+). Residue glutamate 184 is the Proton acceptor of the active site.

Belongs to the PanB family. Homodecamer; pentamer of dimers. The cofactor is Mg(2+).

It is found in the cytoplasm. The catalysed reaction is 3-methyl-2-oxobutanoate + (6R)-5,10-methylene-5,6,7,8-tetrahydrofolate + H2O = 2-dehydropantoate + (6S)-5,6,7,8-tetrahydrofolate. It functions in the pathway cofactor biosynthesis; (R)-pantothenate biosynthesis; (R)-pantoate from 3-methyl-2-oxobutanoate: step 1/2. Functionally, catalyzes the reversible reaction in which hydroxymethyl group from 5,10-methylenetetrahydrofolate is transferred onto alpha-ketoisovalerate to form ketopantoate. The protein is 3-methyl-2-oxobutanoate hydroxymethyltransferase of Syntrophotalea carbinolica (strain DSM 2380 / NBRC 103641 / GraBd1) (Pelobacter carbinolicus).